The chain runs to 210 residues: A-kinase-interacting protein 1 (210 aa).

Disordered stretches follow at residues 58 to 80 (HLEK…ERPP) and 136 to 162 (QRKD…EASQ).

In terms of assembly, interacts with PRKACA and RELA. Expressed at high levels in adult heart and at lower levels in brain, testis, ovary and skeletal muscle. Up-regulated in some breast cancer cell lines. Isoform 1 and isoform 3 are expressed in fetal brain.

The protein resides in the nucleus. Its function is as follows. Enhances NF-kappa-B transcriptional activity by regulating the nuclear localization of the NF-kappa-B subunit RELA and promoting the phosphorylation of RELA by PRKACA. Regulates the effect of the cAMP-dependent protein kinase signaling pathway on the NF-kappa-B activation cascade. The protein is A-kinase-interacting protein 1 (AKIP1) of Homo sapiens (Human).